A 448-amino-acid polypeptide reads, in one-letter code: Homogentisate 1,2-dioxygenase (448 aa).

H303 serves as the catalytic Proton acceptor. Residues H346 and E352 each coordinate Fe cation. Y361 and H382 together coordinate homogentisate. H382 contributes to the Fe cation binding site.

Belongs to the homogentisate dioxygenase family. Hexamer; dimer of trimers. Fe cation is required as a cofactor.

The catalysed reaction is homogentisate + O2 = 4-maleylacetoacetate + H(+). It participates in amino-acid degradation; L-phenylalanine degradation; acetoacetate and fumarate from L-phenylalanine: step 4/6. Its function is as follows. Involved in the catabolism of homogentisate (2,5-dihydroxyphenylacetate or 2,5-OH-PhAc), a central intermediate in the degradation of phenylalanine and tyrosine. Catalyzes the oxidative ring cleavage of the aromatic ring of homogentisate to yield maleylacetoacetate. The chain is Homogentisate 1,2-dioxygenase from Rhodopseudomonas palustris (strain BisB18).